A 273-amino-acid chain; its full sequence is Bis(5'-nucleosyl)-tetraphosphatase, symmetrical (273 aa).

It belongs to the Ap4A hydrolase family.

The enzyme catalyses P(1),P(4)-bis(5'-adenosyl) tetraphosphate + H2O = 2 ADP + 2 H(+). In terms of biological role, hydrolyzes diadenosine 5',5'''-P1,P4-tetraphosphate to yield ADP. This Aeromonas salmonicida (strain A449) protein is Bis(5'-nucleosyl)-tetraphosphatase, symmetrical.